A 450-amino-acid polypeptide reads, in one-letter code: UPF0210 protein CPF_1748 (450 aa).

Belongs to the UPF0210 family. Homodimer.

The polypeptide is UPF0210 protein CPF_1748 (Clostridium perfringens (strain ATCC 13124 / DSM 756 / JCM 1290 / NCIMB 6125 / NCTC 8237 / Type A)).